The chain runs to 430 residues: Long-chain specific acyl-CoA dehydrogenase, mitochondrial (430 aa).

Residues 1–30 (MAARLLLRSLRVLKARSAPRPPPSARCSHS) constitute a mitochondrion transit peptide. The disordered stretch occupies residues 17-39 (SAPRPPPSARCSHSGAEARLETP). Lysine 42 carries the N6-acetyllysine modification. 2 positions are modified to phosphoserine: serine 54 and serine 55. 2 positions are modified to N6-acetyllysine; alternate: lysine 66 and lysine 81. An N6-succinyllysine; alternate mark is found at lysine 66 and lysine 81. An N6-acetyllysine mark is found at lysine 92 and lysine 95. Position 165 is an N6-succinyllysine (lysine 165). 170–179 (IAMTEPGAGS) contacts FAD. Serine 179 is a binding site for substrate. Phosphoserine is present on serine 191. 203–205 (FIT) serves as a coordination point for FAD. 227-228 (AH) serves as a coordination point for substrate. At lysine 240 the chain carries N6-succinyllysine. N6-acetyllysine; alternate occurs at positions 254 and 279. N6-succinyllysine; alternate occurs at positions 254 and 279. Substrate-binding positions include tyrosine 282 and 289-292 (PQER). Glutamate 291 (proton acceptor) is an active-site residue. Arginine 317 lines the FAD pocket. At lysine 318 the chain carries N6-acetyllysine. An N6-acetyllysine; alternate modification is found at lysine 322. Lysine 322 is modified (N6-succinyllysine; alternate). Glutamine 328 contributes to the FAD binding site. Lysine 358 carries the N6-acetyllysine modification. Serine 362 carries the phosphoserine modification. 385-389 (QLHGG) serves as a coordination point for FAD. 412-413 (GG) provides a ligand contact to substrate. FAD is bound at residue 414 to 416 (TNE).

Belongs to the acyl-CoA dehydrogenase family. In terms of assembly, homotetramer. FAD serves as cofactor. Post-translationally, acetylation at Lys-318 and Lys-322 in proximity of the cofactor-binding sites strongly reduces catalytic activity. These sites are deacetylated by SIRT3. Expressed in heart, skeletal muscle, kidney, and brain. Expressed in liver (at protein level).

Its subcellular location is the mitochondrion matrix. It carries out the reaction a long-chain 2,3-saturated fatty acyl-CoA + oxidized [electron-transfer flavoprotein] + H(+) = a long-chain (2E)-enoyl-CoA + reduced [electron-transfer flavoprotein]. The enzyme catalyses oxidized [electron-transfer flavoprotein] + hexadecanoyl-CoA + H(+) = (2E)-hexadecenoyl-CoA + reduced [electron-transfer flavoprotein]. It catalyses the reaction hexanoyl-CoA + oxidized [electron-transfer flavoprotein] + H(+) = (2E)-hexenoyl-CoA + reduced [electron-transfer flavoprotein]. The catalysed reaction is octanoyl-CoA + oxidized [electron-transfer flavoprotein] + H(+) = (2E)-octenoyl-CoA + reduced [electron-transfer flavoprotein]. It carries out the reaction decanoyl-CoA + oxidized [electron-transfer flavoprotein] + H(+) = (2E)-decenoyl-CoA + reduced [electron-transfer flavoprotein]. The enzyme catalyses dodecanoyl-CoA + oxidized [electron-transfer flavoprotein] + H(+) = (2E)-dodecenoyl-CoA + reduced [electron-transfer flavoprotein]. It catalyses the reaction tetradecanoyl-CoA + oxidized [electron-transfer flavoprotein] + H(+) = (2E)-tetradecenoyl-CoA + reduced [electron-transfer flavoprotein]. The catalysed reaction is octadecanoyl-CoA + oxidized [electron-transfer flavoprotein] + H(+) = (2E)-octadecenoyl-CoA + reduced [electron-transfer flavoprotein]. It carries out the reaction eicosanoyl-CoA + oxidized [electron-transfer flavoprotein] + H(+) = (2E)-eicosenoyl-CoA + reduced [electron-transfer flavoprotein]. The enzyme catalyses docosanoyl-CoA + oxidized [electron-transfer flavoprotein] + H(+) = (2E)-docosenoyl-CoA + reduced [electron-transfer flavoprotein]. It catalyses the reaction tetracosanoyl-CoA + oxidized [electron-transfer flavoprotein] + H(+) = (2E)-tetracosenoyl-CoA + reduced [electron-transfer flavoprotein]. The catalysed reaction is (5E)-tetradecenoyl-CoA + oxidized [electron-transfer flavoprotein] + H(+) = (2E,5E)-tetradecadienoyl-CoA + reduced [electron-transfer flavoprotein]. It carries out the reaction (5Z)-tetradecenoyl-CoA + oxidized [electron-transfer flavoprotein] + H(+) = (2E,5Z)-tetradecadienoyl-CoA + reduced [electron-transfer flavoprotein]. The enzyme catalyses oxidized [electron-transfer flavoprotein] + (9Z)-octadecenoyl-CoA + H(+) = (2E,9Z)-octadecadienoyl-CoA + reduced [electron-transfer flavoprotein]. It participates in lipid metabolism; mitochondrial fatty acid beta-oxidation. Functionally, long-chain specific acyl-CoA dehydrogenase is one of the acyl-CoA dehydrogenases that catalyze the first step of mitochondrial fatty acid beta-oxidation, an aerobic process breaking down fatty acids into acetyl-CoA and allowing the production of energy from fats. The first step of fatty acid beta-oxidation consists in the removal of one hydrogen from C-2 and C-3 of the straight-chain fatty acyl-CoA thioester, resulting in the formation of trans-2-enoyl-CoA. Among the different mitochondrial acyl-CoA dehydrogenases, long-chain specific acyl-CoA dehydrogenase can act on saturated and unsaturated acyl-CoAs with 6 to 24 carbons with a preference for 8 to 18 carbons long primary chains. The protein is Long-chain specific acyl-CoA dehydrogenase, mitochondrial of Mus musculus (Mouse).